The following is a 91-amino-acid chain: Large ribosomal subunit protein bL27 (91 aa).

The segment at 1–22 is disordered; sequence MAHKKGQGSSRNGRDSNPQYRG. The segment covering 7–19 has biased composition (polar residues); it reads QGSSRNGRDSNPQ.

The protein belongs to the bacterial ribosomal protein bL27 family.

The sequence is that of Large ribosomal subunit protein bL27 from Myxococcus xanthus (strain DK1622).